We begin with the raw amino-acid sequence, 312 residues long: Olfactory receptor 6N1 (312 aa).

Topologically, residues 1–25 are extracellular; that stretch reads MDTGNWSQVAEFIILGFPHLQGVQI. N-linked (GlcNAc...) asparagine glycosylation occurs at Asn-5. The chain crosses the membrane as a helical span at residues 26–46; sequence YLFLLLLLIYLMTVLGNLLIF. Residues 47–54 are Cytoplasmic-facing; sequence LVVCLDSR. Residues 55–75 form a helical membrane-spanning segment; sequence LHTPMYHFVSILSFSELGYTA. Over 76-99 the chain is Extracellular; sequence ATIPKMLANLLSEKKTISFSGCLL. Residues Cys-97 and Cys-189 are joined by a disulfide bond. Residues 100-120 traverse the membrane as a helical segment; that stretch reads QIYFFHSLGATECYLLTAMAY. Topologically, residues 121-139 are cytoplasmic; the sequence is DRYLAICRPLHYPTLMTPT. A helical transmembrane segment spans residues 140–160; it reads LCAEIAIGCWLGGLAGPVVEI. Residues 161 to 197 are Extracellular-facing; that stretch reads SLISRLPFCGPNRIQHVFCDFPPVLSLACTDTSINVL. Residues 198 to 217 traverse the membrane as a helical segment; that stretch reads VDFVINSCKILATFLLILCS. Topologically, residues 218–237 are cytoplasmic; the sequence is YVQIICTVLRIPSAAGKRKA. A helical membrane pass occupies residues 238–258; it reads ISTCASHFTVVLIFYGSILSM. Over 259–271 the chain is Extracellular; that stretch reads YVQLKKSYSLDYD. A helical membrane pass occupies residues 272 to 292; the sequence is QALAVVYSVLTPFLNPFIYSL. Residues 293–312 are Cytoplasmic-facing; it reads RNKEIKEAVRRQLKRIGILA.

It belongs to the G-protein coupled receptor 1 family.

The protein resides in the cell membrane. Functionally, odorant receptor. This chain is Olfactory receptor 6N1 (OR6N1), found in Homo sapiens (Human).